Consider the following 120-residue polypeptide: MFLLYEYDIFWAFLIISSAIPILAFLISGVLAPIRKGPEKLSSYESGIEPMGDAWLQFRIRYYMFALVFVVFDVETVFLYPWAMSFDVLGVPVFIEAFIFVLILIVGSVYAWRKGALEWS.

3 helical membrane-spanning segments follow: residues 9–29 (IFWAFLIISSAIPILAFLISG), 64–84 (MFALVFVVFDVETVFLYPWAM), and 88–108 (VLGVPVFIEAFIFVLILIVGS).

The protein belongs to the complex I subunit 3 family. As to quaternary structure, NDH is composed of at least 16 different subunits, 5 of which are encoded in the nucleus.

The protein localises to the plastid. Its subcellular location is the chloroplast thylakoid membrane. The catalysed reaction is a plastoquinone + NADH + (n+1) H(+)(in) = a plastoquinol + NAD(+) + n H(+)(out). It carries out the reaction a plastoquinone + NADPH + (n+1) H(+)(in) = a plastoquinol + NADP(+) + n H(+)(out). NDH shuttles electrons from NAD(P)H:plastoquinone, via FMN and iron-sulfur (Fe-S) centers, to quinones in the photosynthetic chain and possibly in a chloroplast respiratory chain. The immediate electron acceptor for the enzyme in this species is believed to be plastoquinone. Couples the redox reaction to proton translocation, and thus conserves the redox energy in a proton gradient. This is NAD(P)H-quinone oxidoreductase subunit 3, chloroplastic from Gossypium hirsutum (Upland cotton).